Reading from the N-terminus, the 351-residue chain is Minor outer capsid protein P9 (351 aa).

Residues 246-330 form a disordered region; that stretch reads GVPAALPQPD…EMDMPDGFHD (85 aa). Residues 285 to 298 show a composition bias toward basic and acidic residues; the sequence is MIRKKVETSKDAPS. Over residues 315 to 324 the composition is skewed to acidic residues; it reads LEDDMSEMDM.

Belongs to the phytoreovirus minor outer capsid protein P9 family.

It is found in the virion. The protein resides in the host cytoplasm. In terms of biological role, minor outer capsid protein. This is Minor outer capsid protein P9 from Alopecurus aequalis (Barnyard grass).